A 164-amino-acid chain; its full sequence is Peptidyl-prolyl cis-trans isomerase B (164 aa).

Residues 1–162 (MVTFHTNHGD…EDVIIESVTV (162 aa)) enclose the PPIase cyclophilin-type domain.

It belongs to the cyclophilin-type PPIase family.

The protein localises to the cytoplasm. It catalyses the reaction [protein]-peptidylproline (omega=180) = [protein]-peptidylproline (omega=0). Its activity is regulated as follows. Inhibition by cyclosporin A with a Ki of 25 to 50 mu-mol, a concentration 1000-fold higher than that required for eukaryotic PPIases. Its function is as follows. PPIases accelerate the folding of proteins. It catalyzes the cis-trans isomerization of proline imidic peptide bonds in oligopeptides. This Escherichia coli (strain K12) protein is Peptidyl-prolyl cis-trans isomerase B (ppiB).